The primary structure comprises 930 residues: Protein ARABIDILLO 1 (930 aa).

Residues 3–8 (RRVRRK) carry the Nuclear localization signal motif. The 47-residue stretch at 44–90 (FVDWISLPYDTVLQLFTCLNYRDRASLASTCKTWRCLGASSCLWTSL) folds into the F-box domain. 13 ARM repeats span residues 172–212 (RITS…KHCP), 244–285 (TSNI…TSSQ), 379–418 (PEGL…TFVV), 428–467 (CGRA…NLSV), 469–508 (ANIA…NLSV), 510–552 (EEHK…NLAA), 554–594 (DKCS…NLAA), 600–639 (NNNA…NLSF), 641–683 (DKNR…GLSV), 685–724 (EANS…NLAF), 726–766 (PGNA…YMFD), 790–831 (LDGA…QVTE), and 835–875 (IQEA…QFTI).

Belongs to the beta-catenin family. Interacts with SNL1. Interacts with MYB53, MYB92 and MYB93. As to expression, expressed ubiquitously, with higher levels in root tip, pericycle and vasculature.

The protein resides in the nucleus. Functionally, promotes lateral root initiation and development, independently of auxin (IAA) and abscisis acid (ABA). This is Protein ARABIDILLO 1 (FBX5) from Arabidopsis thaliana (Mouse-ear cress).